The following is a 142-amino-acid chain: Large ribosomal subunit protein uL11 (142 aa).

This sequence belongs to the universal ribosomal protein uL11 family. Part of the ribosomal stalk of the 50S ribosomal subunit. Interacts with L10 and the large rRNA to form the base of the stalk. L10 forms an elongated spine to which L12 dimers bind in a sequential fashion forming a multimeric L10(L12)X complex. One or more lysine residues are methylated.

Functionally, forms part of the ribosomal stalk which helps the ribosome interact with GTP-bound translation factors. This is Large ribosomal subunit protein uL11 from Mycobacterium sp. (strain MCS).